Reading from the N-terminus, the 294-residue chain is 33 kDa chaperonin (294 aa).

Disulfide bonds link Cys239–Cys241 and Cys272–Cys275.

It belongs to the HSP33 family. Post-translationally, under oxidizing conditions two disulfide bonds are formed involving the reactive cysteines. Under reducing conditions zinc is bound to the reactive cysteines and the protein is inactive.

It localises to the cytoplasm. Its function is as follows. Redox regulated molecular chaperone. Protects both thermally unfolding and oxidatively damaged proteins from irreversible aggregation. Plays an important role in the bacterial defense system toward oxidative stress. This Listeria innocua serovar 6a (strain ATCC BAA-680 / CLIP 11262) protein is 33 kDa chaperonin.